A 262-amino-acid polypeptide reads, in one-letter code: Ferric siderophore reductase (262 aa).

Residues Cys-244, Cys-245, Cys-256, and Cys-259 each contribute to the [2Fe-2S] cluster site.

Monomer. [2Fe-2S] cluster serves as cofactor.

Its subcellular location is the cytoplasm. It is found in the cell inner membrane. With respect to regulation, displays pH dependent redox properties. SufD is necessary for the stability of FhuF. In terms of biological role, siderophore-iron reductase which is involved in iron removal from the hydroxamate-type siderophores coprogen, ferrichrome and ferrioxamine B after their transport into the cell. Binds both the iron-loaded and the apo forms of ferrichrome. This is Ferric siderophore reductase (fhuF) from Escherichia coli (strain K12).